Consider the following 577-residue polypeptide: E3 ubiquitin-protein ligase MSL2 (577 aa).

The sufficient for interaction with MSL1 stretch occupies residues 1–116 (MNPVNATALY…CEYITQTTLA (116 aa)). Zn(2+) is bound by residues Cys-44, Cys-47, Cys-62, His-64, Cys-67, Cys-70, Cys-81, and Cys-84. The RING-type zinc finger occupies 44–85 (CCVCGHLLQDPIAPTNSTCQHYVCKTCKGKKMMMKPSCSWCK). A Glycyl lysine isopeptide (Lys-Gly) (interchain with G-Cter in SUMO2) cross-link involves residue Lys-375. Residues 405 to 427 (TKSMKKSHEHGSKKSHSKTKPGI) form a disordered region. Residues 407–423 (SMKKSHEHGSKKSHSKT) show a composition bias toward basic residues. Ser-447 carries the phosphoserine modification. Residues 457-508 (QEKKGCKCGRATQNPSVLTCRGQRCPCYSNRKACLDCICRGCQNSYMANGEK) enclose the CXC MSL2-type domain. Zn(2+) contacts are provided by Cys-462, Cys-464, Cys-476, Cys-481, Cys-483, Cys-490, Cys-493, Cys-495, and Cys-498.

It belongs to the MSL2 family. As to quaternary structure, component of a multisubunit histone acetyltransferase complex (MSL) at least composed of the KAT8/MOF/MYST1, MSL1/hampin, MSL2 and MSL3. Forms a MSL heterotetrameric core with MSL1.

Its subcellular location is the nucleus. It localises to the chromosome. The enzyme catalyses S-ubiquitinyl-[E2 ubiquitin-conjugating enzyme]-L-cysteine + [acceptor protein]-L-lysine = [E2 ubiquitin-conjugating enzyme]-L-cysteine + N(6)-ubiquitinyl-[acceptor protein]-L-lysine.. It participates in protein modification; protein ubiquitination. Non-catalytic component of the MSL histone acetyltransferase complex, a multiprotein complex that mediates the majority of histone H4 acetylation at 'Lys-16' (H4K16ac), an epigenetic mark that prevents chromatin compaction. The MSL complex is required for chromosome stability and genome integrity by maintaining homeostatic levels of H4K16ac. The MSL complex is also involved in gene dosage by promoting up-regulation of genes expressed by the X chromosome. X up-regulation is required to compensate for autosomal biallelic expression. The MSL complex also participates in gene dosage compensation by promoting expression of Tsix non-coding RNA. MSL2 plays a key role in gene dosage by ensuring biallelic expression of a subset of dosage-sensitive genes, including many haploinsufficient genes. Acts by promoting promoter-enhancer contacts, thereby preventing DNA methylation of one allele and creating a methylation-free environment for methylation-sensitive transcription factors such as SP1, KANSL1 and KANSL3. Also acts as an E3 ubiquitin ligase that promotes monoubiquitination of histone H2B at 'Lys-35' (H2BK34Ub), but not that of H2A. This activity is greatly enhanced by heterodimerization with MSL1. H2B ubiquitination in turn stimulates histone H3 methylation at 'Lys-4' (H3K4me) and 'Lys-79' (H3K79me) and leads to gene activation, including that of HOXA9 and MEIS1. Also involved in the DNA damage response by mediating ubiquitination of TP53/p53 and TP53BP1. The sequence is that of E3 ubiquitin-protein ligase MSL2 from Homo sapiens (Human).